Consider the following 251-residue polypeptide: Elongation factor Ts (251 aa).

The interval 82–85 is involved in Mg(2+) ion dislocation from EF-Tu; sequence TDFV. The segment at 215 to 251 is disordered; the sequence is QMGQKAPEPVAAAPQVEEKAPEPAAKDNPPAKGKKKK. The span at 219–229 shows a compositional bias: low complexity; that stretch reads KAPEPVAAAPQ. Positions 230–239 are enriched in basic and acidic residues; that stretch reads VEEKAPEPAA.

It belongs to the EF-Ts family.

It is found in the cytoplasm. Its function is as follows. Associates with the EF-Tu.GDP complex and induces the exchange of GDP to GTP. It remains bound to the aminoacyl-tRNA.EF-Tu.GTP complex up to the GTP hydrolysis stage on the ribosome. The polypeptide is Elongation factor Ts (Microcystis aeruginosa (strain NIES-843 / IAM M-2473)).